The primary structure comprises 129 residues: Follitropin subunit beta (129 aa).

Positions 1–20 (MKSVQFCFLFCCWRAICCRS) are cleaved as a signal peptide. Cystine bridges form between Cys-21–Cys-69, Cys-35–Cys-84, Cys-38–Cys-122, Cys-46–Cys-100, Cys-50–Cys-102, and Cys-105–Cys-112. Residues Asn-25 and Asn-42 are each glycosylated (N-linked (GlcNAc...) asparagine).

This sequence belongs to the glycoprotein hormones subunit beta family. In terms of assembly, heterodimer. The active follitropin is a heterodimer composed of an alpha chain/CGA shared with other hormones and a unique beta chain/FSHB shown here.

The protein resides in the secreted. Its function is as follows. Together with the alpha chain CGA constitutes follitropin, the follicle-stimulating hormone, and provides its biological specificity to the hormone heterodimer. Binds FSHR, a G protein-coupled receptor, on target cells to activate downstream signaling pathways. Follitropin is involved in follicle development and spermatogenesis in reproductive organs. The protein is Follitropin subunit beta (FSHB) of Bubalus bubalis (Domestic water buffalo).